The following is a 295-amino-acid chain: Zinc finger C2H2 protein ECU08_0560 (295 aa).

2 C2H2-type zinc fingers span residues 219-243 (FVCTYNDCKRAFKRYEHLKRHNLMH) and 249-273 (HKCRFPGCSKAFSRSDNLSQHYKVH).

The polypeptide is Zinc finger C2H2 protein ECU08_0560 (Encephalitozoon cuniculi (strain GB-M1) (Microsporidian parasite)).